The chain runs to 381 residues: MNLLKRYAAPVACAAAVLVFAACSSTKDARRVPTPLTEFKPVLDVQQVWTASVGKGGRYSFSPVAVGDAVYVAGANGSVEKIDAKTGQQVWRTKIGSDLSAGVGSDGNLTAVGALKGGVFVLGPDGKQLWKATVQGEIFSPPLVGNGLVIVRTIDGQVIAFAAQTGEQKWTYRNRAVPLNLRVSAGMTFAGDAAVLAGFPGGGLVALNLQTGEPFWQTPVSFPKGVTEVERINDVTGAPTLVGAETCAVTFQGQLGCFDANSGRPLWEKPFSSRSGVAQDDTVVVGGDDWSVVSAYDVATGKALWRNDKLKSRDVGVPYLLGRAVVLGDYKGFVHFLSRDDGTFVARMKTDGSAIAAAPVLAGNTLVVLTQDGGVYGFRPR.

An N-terminal signal peptide occupies residues 1-22 (MNLLKRYAAPVACAAAVLVFAA). C23 is lipidated: N-palmitoyl cysteine. The S-diacylglycerol cysteine moiety is linked to residue C23.

This sequence belongs to the BamB family. As to quaternary structure, part of the Bam complex.

The protein localises to the cell outer membrane. Part of the outer membrane protein assembly complex, which is involved in assembly and insertion of beta-barrel proteins into the outer membrane. In Burkholderia pseudomallei (strain K96243), this protein is Outer membrane protein assembly factor BamB.